Consider the following 153-residue polypeptide: Cytochrome c oxidase subunit 5A, mitochondrial (153 aa).

Residues 1-20 (MLRNTFTRAGGLSRITSVRF) constitute a mitochondrion transit peptide. At 21–88 (AQTHALSNAA…EWGPRRPVLN (68 aa)) the chain is on the mitochondrial matrix side. The chain crosses the membrane as a helical span at residues 89–111 (KGDSSFIAKGVAAGLLFSVGLFA). Topologically, residues 112–153 (VVRMAGGQDAKTMNKEWQLKSDEYLKSKNANPWGGYSQVQSK) are mitochondrial intermembrane.

This sequence belongs to the cytochrome c oxidase IV family. In terms of assembly, component of the cytochrome c oxidase (complex IV, CIV), a multisubunit enzyme composed of 12 subunits. The complex is composed of a catalytic core of 3 subunits COX1, COX2 and COX3, encoded in the mitochondrial DNA, and 9 supernumerary subunits COX4, COX5A (or COX5B), COX6, COX7, COX8, COX9, COX12, COX13 and COX26, which are encoded in the nuclear genome. COX5A is the predominant subunit V during aerobic/normoxic growth, it gets replaced by COX5B under anaerobic/hypoxic conditions. The complex exists as a monomer or a dimer and forms supercomplexes (SCs) in the inner mitochondrial membrane with a dimer of ubiquinol-cytochrome c oxidoreductase (cytochrome b-c1 complex, complex III, CIII), resulting in 2 different assemblies (supercomplexes III(2)IV and III(2)IV(2)). COX5A interacts with COR1, CYT1 and QCR6 at the CIII-CIV interface.

It is found in the mitochondrion inner membrane. It participates in energy metabolism; oxidative phosphorylation. Component of the cytochrome c oxidase, the last enzyme in the mitochondrial electron transport chain which drives oxidative phosphorylation. The respiratory chain contains 3 multisubunit complexes succinate dehydrogenase (complex II, CII), ubiquinol-cytochrome c oxidoreductase (cytochrome b-c1 complex, complex III, CIII) and cytochrome c oxidase (complex IV, CIV), that cooperate to transfer electrons derived from NADH and succinate to molecular oxygen, creating an electrochemical gradient over the inner membrane that drives transmembrane transport and the ATP synthase. Cytochrome c oxidase is the component of the respiratory chain that catalyzes the reduction of oxygen to water. Electrons originating from reduced cytochrome c in the intermembrane space (IMS) are transferred via the dinuclear copper A center (CU(A)) of COX2 and heme A of COX1 to the active site in COX1, a binuclear center (BNC) formed by heme A3 and copper B (CU(B)). The BNC reduces molecular oxygen to 2 water molecules using 4 electrons from cytochrome c in the IMS and 4 protons from the mitochondrial matrix. The polypeptide is Cytochrome c oxidase subunit 5A, mitochondrial (COX5A) (Saccharomyces cerevisiae (strain ATCC 204508 / S288c) (Baker's yeast)).